Consider the following 354-residue polypeptide: Tsukushi (354 aa).

Residues 1 to 17 form the signal peptide; that stretch reads MLCSLFLLLLAVGRVQT. Residues 18–59 form the LRRNT domain; it reads TRPCFPGCQCEEETFGLFDSFSLIRVDCSSLGPHIVPVPIPL. 10 LRR repeats span residues 60–81, 86–107, 110–131, 133–154, 160–180, 186–207, 208–228, 231–253, 256–277, and 281–302; these read DTAH…VLAG, TLAG…AFSR, YLES…IFTS, PLSD…AFTT, ALHV…PARA, TIQS…RDLP, LRYL…AFMG, GLTH…GFRE, GLQV…EVFS, and LLQE…LLHH. N-linked (GlcNAc...) asparagine glycosylation occurs at Asn-75. Asn-138 is a glycosylation site (N-linked (GlcNAc...) asparagine). An N-linked (GlcNAc...) asparagine glycan is attached at Asn-191.

As to quaternary structure, interacts with FZD4 (via FZ domain); competes with WNT2B for binding to FZD4, inhibiting Wnt signaling and repressing peripheral eye development. Interacts with TGFB1; the interaction contributes to regulation of the hair cycle. Interacts with netrin. Interacts with CCN2. Expressed in macrophages in inflamed wounds with wound expression starting 2 days post-wounding (dpw) (at protein level). At 7 dpw, expressed from epidermis and extracellular matrix in the wound edge to neoepidermis and granulation tissue and in panniculus carnosus under the granulation tissue (at protein level). After fibrosis, disappears in the dermal area at 11 dpw (at protein level). Expressed in the hair follicle during morphogenesis and the hair cycle (at protein level). In embryonic brain, strong expression in the olfactory bulb, anterior olfactory nucleus, neocortex, piriform cortex, glial wedge, midline zipper glia, indusium griseum and the area surrounding the anterior commissure (AC) but not on AC axons (at protein level). In the adult eye, expressed in retinal layers, lens epithelium, and ciliary body where it is expressed predominantly in the inner non-pigmented layer. Expressed in almost all brain regions in the embryo, in the cortex and the lateral ventricle at P0 and is restricted to the subventricular zone and lateral nucleus of the amygdala in adults. Prominent expression in hippocampal regions from early postnatal stages until postnatal day 15 and gradually declines at later stages. Expressed in almost all bone regions in the femurs of juveniles. In the inner ear, accumulates in nonprosensory regions during early embryonic stages and in both nonprosensory and prosensory regions in late embryonic stages. In the adult ear, expressed in the organ of Corti, spiral ganglion cells, and the stria vascularis. Highly expressed in the liver where it is detected primarily in hepatocytes but not in non-parenchymal cells.

The protein resides in the secreted. Contributes to various developmental events and other processes such as wound healing and cholesterol homeostasis through its interactions with multiple signaling pathways. Wnt signaling inhibitor which competes with WNT2B for binding to Wnt receptor FZD4 and represses WNT2B-dependent development of the peripheral eye. Plays a role in regulating the hair cycle by controlling TGFB1 signaling. Required for the development of the anterior commissure in the brain by inhibiting neurite outgrowth. Essential for terminal differentiation of hippocampal neural stem cells. Plays a role in regulating bone elongation and bone mass by modulating growth plate chondrocyte function and overall body size. Required for development of the inner ear through its involvement in stereocilia formation in inner hair cells. Facilitates wound healing by inhibiting secretion of TGFB1 from macrophages which prevents myofibroblast differentiation, maintaining inflammatory cell quiescence. Plays a role in cholesterol homeostasis by reducing circulating high-density lipoprotein cholesterol, lowering cholesterol efflux capacity and decreasing cholesterol-to-bile acid conversion in the liver. In one study, shown to negatively regulate sympathetic innervation in brown fat, leading to reduced energy expenditure. In another study, shown not to affect brown fat thermogenic capacity, body weight gain or glucose homeostasis. This is Tsukushi from Mus musculus (Mouse).